A 283-amino-acid polypeptide reads, in one-letter code: Formamidopyrimidine-DNA glycosylase (283 aa).

Catalysis depends on P2, which acts as the Schiff-base intermediate with DNA. Residue E3 is the Proton donor of the active site. K58 serves as the catalytic Proton donor; for beta-elimination activity. Residues H100, R119, and R162 each coordinate DNA. An FPG-type zinc finger spans residues 247 to 283 (DVYGREGEPCRRAGCDGTVQRITQSGRSSFYCAQCQR). R273 functions as the Proton donor; for delta-elimination activity in the catalytic mechanism.

It belongs to the FPG family. In terms of assembly, monomer. Requires Zn(2+) as cofactor.

It carries out the reaction Hydrolysis of DNA containing ring-opened 7-methylguanine residues, releasing 2,6-diamino-4-hydroxy-5-(N-methyl)formamidopyrimidine.. It catalyses the reaction 2'-deoxyribonucleotide-(2'-deoxyribose 5'-phosphate)-2'-deoxyribonucleotide-DNA = a 3'-end 2'-deoxyribonucleotide-(2,3-dehydro-2,3-deoxyribose 5'-phosphate)-DNA + a 5'-end 5'-phospho-2'-deoxyribonucleoside-DNA + H(+). Its function is as follows. Involved in base excision repair of DNA damaged by oxidation or by mutagenic agents. Acts as a DNA glycosylase that recognizes and removes damaged bases. Has a preference for oxidized purines, such as 7,8-dihydro-8-oxoguanine (8-oxoG). Has AP (apurinic/apyrimidinic) lyase activity and introduces nicks in the DNA strand. Cleaves the DNA backbone by beta-delta elimination to generate a single-strand break at the site of the removed base with both 3'- and 5'-phosphates. The polypeptide is Formamidopyrimidine-DNA glycosylase (Ruegeria pomeroyi (strain ATCC 700808 / DSM 15171 / DSS-3) (Silicibacter pomeroyi)).